The sequence spans 101 residues: Glutaredoxin-1 (101 aa).

In terms of domain architecture, Glutaredoxin spans 3 to 101; sequence DSFVQSKLRD…MMLRQIGALV (99 aa). Cys-23 and Cys-26 are oxidised to a cystine.

This sequence belongs to the glutaredoxin family.

The protein resides in the cytoplasm. Its function is as follows. Has a glutathione-disulfide oxidoreductase activity in the presence of NADPH and glutathione reductase. Reduces low molecular weight disulfides and proteins. The polypeptide is Glutaredoxin-1 (GLRX) (Gallus gallus (Chicken)).